The chain runs to 402 residues: Speedy protein E2 (402 aa).

Positions 1–89 (MDRTETRFRK…EEPEKELAPE (89 aa)) are disordered. Over residues 16 to 39 (GKITTSRQPHPQNEQSPQRSTSGY) the composition is skewed to polar residues. The span at 76-89 (DESEEEPEKELAPE) shows a compositional bias: acidic residues.

Belongs to the Speedy/Ringo family.

This is Speedy protein E2 (SPDYE2) from Homo sapiens (Human).